Consider the following 299-residue polypeptide: Nicotinate-nucleotide pyrophosphorylase [carboxylating] (299 aa).

The important for hexamer formation stretch occupies residues 8–12; the sequence is FLLPP. Residues arginine 102, 138 to 139, 160 to 161, lysine 171, glutamate 201, aspartate 222, 248 to 250, and glycine 270 each bind quinolinate; these read RK, HR, and SGG.

The protein belongs to the NadC/ModD family. Hexamer formed by 3 homodimers.

The catalysed reaction is nicotinate beta-D-ribonucleotide + CO2 + diphosphate = quinolinate + 5-phospho-alpha-D-ribose 1-diphosphate + 2 H(+). It participates in cofactor biosynthesis; NAD(+) biosynthesis; nicotinate D-ribonucleotide from quinolinate: step 1/1. Its function is as follows. Involved in the catabolism of quinolinic acid (QA). The polypeptide is Nicotinate-nucleotide pyrophosphorylase [carboxylating] (Qprt) (Rattus norvegicus (Rat)).